We begin with the raw amino-acid sequence, 102 residues long: Nuclear protein 2 (102 aa).

2 disordered regions span residues 1 to 26 (MDPP…ALPT) and 46 to 102 (PASG…TRLA). Residues 85 to 102 (QRKRRQRQLQPRPRTRLA) show a composition bias toward basic residues.

It belongs to the NUPR family.

The protein localises to the nucleus. Acts as a transcriptional repressor by inhibiting gene expression at the NUPR1 promoter in a p53/TP53-dependent manner in cancer cells. Involved in the G1 cell cycle arrest, and in a decrease in cell viability and cell proliferation of pancreatic cancer cells. Plays a role as a negative regulator of the protumoral factor NUPR1. The chain is Nuclear protein 2 from Mus musculus (Mouse).